A 276-amino-acid chain; its full sequence is NH(3)-dependent NAD(+) synthetase (276 aa).

Residue Gly43 to Ser50 coordinates ATP. Residue Asp49 coordinates Mg(2+). Deamido-NAD(+) is bound at residue Arg146. Thr166 serves as a coordination point for ATP. Position 171 (Glu171) interacts with Mg(2+). Lys179 and Asp186 together coordinate deamido-NAD(+). Residues Lys195 and Thr217 each coordinate ATP. Residue His266–Lys267 participates in deamido-NAD(+) binding.

Belongs to the NAD synthetase family. In terms of assembly, homodimer.

It catalyses the reaction deamido-NAD(+) + NH4(+) + ATP = AMP + diphosphate + NAD(+) + H(+). Its pathway is cofactor biosynthesis; NAD(+) biosynthesis; NAD(+) from deamido-NAD(+) (ammonia route): step 1/1. Its function is as follows. Catalyzes the ATP-dependent amidation of deamido-NAD to form NAD. Uses ammonia as a nitrogen source. This is NH(3)-dependent NAD(+) synthetase from Vibrio parahaemolyticus serotype O3:K6 (strain RIMD 2210633).